Consider the following 228-residue polypeptide: Ribosomal RNA large subunit methyltransferase E (228 aa).

Residues G76, W78, D99, D115, and D139 each contribute to the S-adenosyl-L-methionine site. Residue K179 is the Proton acceptor of the active site.

This sequence belongs to the class I-like SAM-binding methyltransferase superfamily. RNA methyltransferase RlmE family.

It is found in the cytoplasm. The catalysed reaction is uridine(2552) in 23S rRNA + S-adenosyl-L-methionine = 2'-O-methyluridine(2552) in 23S rRNA + S-adenosyl-L-homocysteine + H(+). In terms of biological role, specifically methylates the uridine in position 2552 of 23S rRNA at the 2'-O position of the ribose in the fully assembled 50S ribosomal subunit. The protein is Ribosomal RNA large subunit methyltransferase E of Nitrobacter hamburgensis (strain DSM 10229 / NCIMB 13809 / X14).